Consider the following 102-residue polypeptide: Large ribosomal subunit protein uL24 (102 aa).

Belongs to the universal ribosomal protein uL24 family. As to quaternary structure, part of the 50S ribosomal subunit.

In terms of biological role, one of two assembly initiator proteins, it binds directly to the 5'-end of the 23S rRNA, where it nucleates assembly of the 50S subunit. Its function is as follows. One of the proteins that surrounds the polypeptide exit tunnel on the outside of the subunit. The chain is Large ribosomal subunit protein uL24 from Limosilactobacillus reuteri (strain DSM 20016) (Lactobacillus reuteri).